Reading from the N-terminus, the 142-residue chain is Tol-Pal system protein TolR (142 aa).

The Cytoplasmic segment spans residues 1 to 17; it reads MARARGRGRRDLKSEIN. Residues 18 to 38 traverse the membrane as a helical segment; the sequence is IVPLLDVLLVLLLIFMATAPI. Over 39–142 the chain is Periplasmic; the sequence is ITQSVEVDLP…KSVGLMTQPI (104 aa).

The protein belongs to the ExbD/TolR family. In terms of assembly, the Tol-Pal system is composed of five core proteins: the inner membrane proteins TolA, TolQ and TolR, the periplasmic protein TolB and the outer membrane protein Pal. They form a network linking the inner and outer membranes and the peptidoglycan layer.

Its subcellular location is the cell inner membrane. Functionally, part of the Tol-Pal system, which plays a role in outer membrane invagination during cell division and is important for maintaining outer membrane integrity. Required, with TolQ, for the proton motive force-dependent activation of TolA and for TolA-Pal interaction. The sequence is that of Tol-Pal system protein TolR from Escherichia coli O157:H7.